We begin with the raw amino-acid sequence, 219 residues long: 2-C-methyl-D-erythritol 4-phosphate cytidylyltransferase (219 aa).

The protein belongs to the IspD/TarI cytidylyltransferase family. IspD subfamily.

It carries out the reaction 2-C-methyl-D-erythritol 4-phosphate + CTP + H(+) = 4-CDP-2-C-methyl-D-erythritol + diphosphate. The protein operates within isoprenoid biosynthesis; isopentenyl diphosphate biosynthesis via DXP pathway; isopentenyl diphosphate from 1-deoxy-D-xylulose 5-phosphate: step 2/6. Its function is as follows. Catalyzes the formation of 4-diphosphocytidyl-2-C-methyl-D-erythritol from CTP and 2-C-methyl-D-erythritol 4-phosphate (MEP). The sequence is that of 2-C-methyl-D-erythritol 4-phosphate cytidylyltransferase from Bacteroides thetaiotaomicron (strain ATCC 29148 / DSM 2079 / JCM 5827 / CCUG 10774 / NCTC 10582 / VPI-5482 / E50).